A 148-amino-acid chain; its full sequence is Small ribosomal subunit protein eS19 (148 aa).

The protein belongs to the eukaryotic ribosomal protein eS19 family.

This Dictyostelium discoideum (Social amoeba) protein is Small ribosomal subunit protein eS19 (rps19).